A 629-amino-acid chain; its full sequence is Phosphomethylpyrimidine synthase (629 aa).

Positions Met1–Pro24 are disordered. Polar residues predominate over residues Glu13 to Pro24. Substrate contacts are provided by residues Asn233, Met262, Tyr291, His327, Ser347–Gly349, Asp388–Arg391, and Glu427. His431 is a Zn(2+) binding site. A substrate-binding site is contributed by Tyr454. His495 is a binding site for Zn(2+). [4Fe-4S] cluster is bound by residues Cys575, Cys578, and Cys583.

Belongs to the ThiC family. In terms of assembly, homodimer. The cofactor is [4Fe-4S] cluster.

The catalysed reaction is 5-amino-1-(5-phospho-beta-D-ribosyl)imidazole + S-adenosyl-L-methionine = 4-amino-2-methyl-5-(phosphooxymethyl)pyrimidine + CO + 5'-deoxyadenosine + formate + L-methionine + 3 H(+). It functions in the pathway cofactor biosynthesis; thiamine diphosphate biosynthesis. Its function is as follows. Catalyzes the synthesis of the hydroxymethylpyrimidine phosphate (HMP-P) moiety of thiamine from aminoimidazole ribotide (AIR) in a radical S-adenosyl-L-methionine (SAM)-dependent reaction. In Pseudomonas syringae pv. tomato (strain ATCC BAA-871 / DC3000), this protein is Phosphomethylpyrimidine synthase.